Reading from the N-terminus, the 348-residue chain is Glycerol-1-phosphate dehydrogenase [NAD(P)+] (348 aa).

NAD(+) contacts are provided by residues 94-98 and 116-119; these read GKVID and TTAS. A substrate-binding site is contributed by Asp121. Ser125 contributes to the NAD(+) binding site. Residue Asp168 participates in substrate binding. Zn(2+)-binding residues include Asp168 and His248. Substrate is bound at residue His252. His264 is a Zn(2+) binding site.

This sequence belongs to the glycerol-1-phosphate dehydrogenase family. In terms of assembly, homooctamer. Requires Zn(2+) as cofactor.

The protein resides in the cytoplasm. The catalysed reaction is sn-glycerol 1-phosphate + NAD(+) = dihydroxyacetone phosphate + NADH + H(+). The enzyme catalyses sn-glycerol 1-phosphate + NADP(+) = dihydroxyacetone phosphate + NADPH + H(+). It participates in membrane lipid metabolism; glycerophospholipid metabolism. Catalyzes the NAD(P)H-dependent reduction of dihydroxyacetonephosphate (DHAP or glycerone phosphate) to glycerol 1-phosphate (G1P). The G1P thus generated is used as the glycerophosphate backbone of phospholipids in the cellular membranes of Archaea. This chain is Glycerol-1-phosphate dehydrogenase [NAD(P)+], found in Methanobrevibacter smithii (strain ATCC 35061 / DSM 861 / OCM 144 / PS).